Reading from the N-terminus, the 320-residue chain is Cytochrome f (320 aa).

A signal peptide spans Met-1–Ala-35. Residues Tyr-36, Cys-56, Cys-59, and His-60 each coordinate heme. The chain crosses the membrane as a helical span at residues Val-286–Lys-306.

Belongs to the cytochrome f family. The 4 large subunits of the cytochrome b6-f complex are cytochrome b6, subunit IV (17 kDa polypeptide, petD), cytochrome f and the Rieske protein, while the 4 small subunits are PetG, PetL, PetM and PetN. The complex functions as a dimer. Requires heme as cofactor.

The protein localises to the plastid thylakoid membrane. In terms of biological role, component of the cytochrome b6-f complex, which mediates electron transfer between photosystem II (PSII) and photosystem I (PSI), cyclic electron flow around PSI, and state transitions. The sequence is that of Cytochrome f from Cuscuta exaltata (Tall dodder).